The sequence spans 99 residues: MTEQHETIQSVTDGIYNNLVTSMIHSIVSKETAREKLLRSRYGSYKQYHYDPNSQLDIHGNPKQQDSSQYFYCENCGREVSGNRFAAHLQRCLTRGSRR.

The segment at 71-92 (FYCENCGREVSGNRFAAHLQRC) adopts an SGF11-type zinc-finger fold.

Belongs to the SGF11 family. In terms of assembly, component of the 1.8 MDa SAGA transcription coactivator-HAT complex. SAGA is built of 5 distinct domains with specialized functions. Within the SAGA complex, SUS1, SGF11, SGF73 and UBP8 form an additional subcomplex of SAGA called the DUB module (deubiquitination module). Interacts directly with SGF73, SUS1 and UBP8.

It is found in the nucleus. Functions as a component of the transcription regulatory histone acetylation (HAT) complex SAGA. At the promoters, SAGA is required for recruitment of the basal transcription machinery. It influences RNA polymerase II transcriptional activity through different activities such as TBP interaction and promoter selectivity, interaction with transcription activators, and chromatin modification through histone acetylation and deubiquitination. SAGA acetylates nucleosomal histone H3 to some extent (to form H3K9ac, H3K14ac, H3K18ac and H3K23ac). SAGA interacts with DNA via upstream activating sequences (UASs). Involved in transcriptional regulation of a subset of SAGA-regulated genes. Within the SAGA complex, participates in a subcomplex, that specifically deubiquitinates histones H2B. The chain is SAGA-associated factor 11 from Candida glabrata (strain ATCC 2001 / BCRC 20586 / JCM 3761 / NBRC 0622 / NRRL Y-65 / CBS 138) (Yeast).